The following is a 289-amino-acid chain: Glucanase inhibitor protein 2 (289 aa).

The signal sequence occupies residues 1–19 (MKVTATIAAASMAIAAASA). Positions 29-257 (ILGGSIIPSG…ALKWVNPIIK (229 aa)) constitute a Peptidase S1 domain. A disulfide bridge connects residues C56 and C72. N-linked (GlcNAc...) asparagine glycans are attached at residues N89, N104, and N109. 2 cysteine pairs are disulfide-bonded: C180/C192 and C202/C233.

Belongs to the peptidase S1 family.

The protein resides in the secreted. Its function is as follows. Secreted effector that suppresses host plant glucan elicitor-mediated defense responses. Targets host endoglucanases and inhibits the endoglucanase-mediated release of elicitor-active glucan oligosaccharides from P.sojae cell walls. The protein is Glucanase inhibitor protein 2 of Phytophthora sojae (Soybean stem and root rot agent).